The chain runs to 213 residues: N-(5'-phosphoribosyl)anthranilate isomerase (213 aa).

Belongs to the TrpF family.

It carries out the reaction N-(5-phospho-beta-D-ribosyl)anthranilate = 1-(2-carboxyphenylamino)-1-deoxy-D-ribulose 5-phosphate. Its pathway is amino-acid biosynthesis; L-tryptophan biosynthesis; L-tryptophan from chorismate: step 3/5. This chain is N-(5'-phosphoribosyl)anthranilate isomerase, found in Hahella chejuensis (strain KCTC 2396).